Reading from the N-terminus, the 219-residue chain is Chalcone--flavanone isomerase (219 aa).

Substrate is bound by residues threonine 50, asparagine 115, and serine 192.

Belongs to the chalcone isomerase family.

The catalysed reaction is a chalcone = a flavanone.. Its pathway is secondary metabolite biosynthesis; flavonoid biosynthesis. Functionally, catalyzes the intramolecular cyclization of bicyclic chalcones into tricyclic (S)-flavanones. Responsible for the isomerization of 4,2',4',6'-tetrahydroxychalcone (also termed chalcone) into naringenin. The chain is Chalcone--flavanone isomerase (CHI) from Pyrus communis (Pear).